Reading from the N-terminus, the 491-residue chain is MRIEISSDNPLEHATPALVVGCFEDERGRVFEECDAALGGCLGRLAETREFTGKAGTTRLLHTLGKLPAERLLLVGLGKKADLTHERLRQAAGHAMQALRTSRAASFASTLPLASSLPRATESVAIGSLLGSYSFDLYKTKDKEQRFAFEEMTLMAPQPEREMARAVAEQAEQICRGVQLARDLVSHPGNVVTPGYLAQAARELAARHALEVRVYEQDELESLGMNALLGVGKGAAEPPRLIVLRYRGEGAKGRPVVLVGKGITFDSGGISIKPGPGMEEMKTDMAGAAAVFGTLEAAALLRLPVDLIGVVPTTENMPDGKAFKPGDVLASLSGTTIEITNTDAEGRLILCDALHFAQKFKPAAMIDLATLTGACVVALGHEASAVLGNDQRLVDALKKSGDETGERLWQLPLWDEYGEGMKSDIADIKNAGSRDGGTIKAAWFLKQFVGETRWAHLDIAGTAWSEKARPYSPKGATGVGVRLLIEYLRRK.

Lysine 261 and aspartate 266 together coordinate Mn(2+). Lysine 273 is a catalytic residue. Residues aspartate 284, aspartate 343, and glutamate 345 each contribute to the Mn(2+) site. Arginine 347 is a catalytic residue.

It belongs to the peptidase M17 family. It depends on Mn(2+) as a cofactor.

The protein resides in the cytoplasm. It catalyses the reaction Release of an N-terminal amino acid, Xaa-|-Yaa-, in which Xaa is preferably Leu, but may be other amino acids including Pro although not Arg or Lys, and Yaa may be Pro. Amino acid amides and methyl esters are also readily hydrolyzed, but rates on arylamides are exceedingly low.. It carries out the reaction Release of an N-terminal amino acid, preferentially leucine, but not glutamic or aspartic acids.. Functionally, presumably involved in the processing and regular turnover of intracellular proteins. Catalyzes the removal of unsubstituted N-terminal amino acids from various peptides. The sequence is that of Probable cytosol aminopeptidase from Geobacter sp. (strain M21).